Consider the following 417-residue polypeptide: NADH-quinone oxidoreductase subunit D (417 aa).

The protein belongs to the complex I 49 kDa subunit family. As to quaternary structure, NDH-1 is composed of 14 different subunits. Subunits NuoB, C, D, E, F, and G constitute the peripheral sector of the complex.

Its subcellular location is the cell inner membrane. The catalysed reaction is a quinone + NADH + 5 H(+)(in) = a quinol + NAD(+) + 4 H(+)(out). NDH-1 shuttles electrons from NADH, via FMN and iron-sulfur (Fe-S) centers, to quinones in the respiratory chain. The immediate electron acceptor for the enzyme in this species is believed to be ubiquinone. Couples the redox reaction to proton translocation (for every two electrons transferred, four hydrogen ions are translocated across the cytoplasmic membrane), and thus conserves the redox energy in a proton gradient. The sequence is that of NADH-quinone oxidoreductase subunit D from Acidovorax sp. (strain JS42).